The following is a 361-amino-acid chain: Chorismate synthase (361 aa).

NADP(+) is bound by residues Arg-48 and Arg-54. FMN-binding positions include 125–127 (RSS), 238–239 (NA), Gly-278, 293–297 (KPTSS), and Arg-319.

Belongs to the chorismate synthase family. Homotetramer. Requires FMNH2 as cofactor.

It carries out the reaction 5-O-(1-carboxyvinyl)-3-phosphoshikimate = chorismate + phosphate. It functions in the pathway metabolic intermediate biosynthesis; chorismate biosynthesis; chorismate from D-erythrose 4-phosphate and phosphoenolpyruvate: step 7/7. Its function is as follows. Catalyzes the anti-1,4-elimination of the C-3 phosphate and the C-6 proR hydrogen from 5-enolpyruvylshikimate-3-phosphate (EPSP) to yield chorismate, which is the branch point compound that serves as the starting substrate for the three terminal pathways of aromatic amino acid biosynthesis. This reaction introduces a second double bond into the aromatic ring system. This is Chorismate synthase from Enterobacter sp. (strain 638).